Here is a 313-residue protein sequence, read N- to C-terminus: Formimidoylglutamase (313 aa).

His130, Asp155, His157, Asp159, Asp241, and Asp243 together coordinate Mn(2+).

Belongs to the arginase family. The cofactor is Mn(2+).

It carries out the reaction N-formimidoyl-L-glutamate + H2O = formamide + L-glutamate. The protein operates within amino-acid degradation; L-histidine degradation into L-glutamate; L-glutamate from N-formimidoyl-L-glutamate (hydrolase route): step 1/1. Catalyzes the conversion of N-formimidoyl-L-glutamate to L-glutamate and formamide. This chain is Formimidoylglutamase, found in Salmonella typhi.